The primary structure comprises 864 residues: Leucine--tRNA ligase (864 aa).

A 'HIGH' region motif is present at residues 42 to 52; the sequence is PYPSGKLHMGH. Positions 624 to 628 match the 'KMSKS' region motif; the sequence is KMSKS. Lys-627 contacts ATP.

It belongs to the class-I aminoacyl-tRNA synthetase family.

The protein resides in the cytoplasm. It carries out the reaction tRNA(Leu) + L-leucine + ATP = L-leucyl-tRNA(Leu) + AMP + diphosphate. The protein is Leucine--tRNA ligase of Burkholderia multivorans (strain ATCC 17616 / 249).